The primary structure comprises 907 residues: HMG box transcription factor BBX (907 aa).

Basic and acidic residues predominate over residues 1–19 (MKGSNRNKDHSTEGEGDGK). 4 disordered regions span residues 1-24 (MKGS…PKRK), 37-80 (LDFS…EQRA), 152-185 (TTNK…PTPK), and 220-242 (TPEA…RQKS). 2 stretches are compositionally biased toward acidic residues: residues 39-52 (FSEE…EEDI) and 61-75 (DGLE…DDES). Positions 80-148 (ARRPMNAFLL…AFMKANPGYR (69 aa)) form a DNA-binding region, HMG box. Residues 152–164 (TTNKPVKSPTPTV) show a composition bias toward polar residues. Ser-242 is modified (phosphoserine). A Glycyl lysine isopeptide (Lys-Gly) (interchain with G-Cter in SUMO2) cross-link involves residue Lys-384. Disordered regions lie at residues 435–483 (IIED…DIES), 495–612 (DWGV…SERS), and 628–672 (TSLR…KKFK). Positions 447–457 (KIKKKKKKNKL) are enriched in basic residues. Phosphoserine is present on residues Ser-476 and Ser-483. Composition is skewed to basic and acidic residues over residues 496–506 (WGVDKLGETPR) and 534–550 (KKVS…ESRP). A Glycyl lysine isopeptide (Lys-Gly) (interchain with G-Cter in SUMO2) cross-link involves residue Lys-571. Positions 591–612 (KPEDSDCHRKTETCGSRKSERS) are enriched in basic and acidic residues. Residues 656-668 (ESWTFNQSGTSGS) show a composition bias toward polar residues. Lys-693 is covalently cross-linked (Glycyl lysine isopeptide (Lys-Gly) (interchain with G-Cter in SUMO2)). Ser-701 is subject to Phosphoserine. Disordered regions lie at residues 708 to 736 (KCVS…SGDK), 769 to 854 (NALS…SSTP), and 877 to 907 (VHRG…CADQ). A compositionally biased stretch (low complexity) spans 723–732 (SSESTKTSKG). The segment covering 772 to 783 (SIPNTPEPTTMQ) has biased composition (polar residues). Residue Ser-789 is modified to Phosphoserine. Positions 790–801 (QKRKARKTKITH) are enriched in basic residues. The residue at position 811 (Ser-811) is a Phosphoserine.

It localises to the nucleus. Transcription factor that is necessary for cell cycle progression from G1 to S phase. The protein is HMG box transcription factor BBX (Bbx) of Mus musculus (Mouse).